The following is a 133-amino-acid chain: Ribonuclease P protein component (133 aa).

Belongs to the RnpA family. Consists of a catalytic RNA component (M1 or rnpB) and a protein subunit.

It catalyses the reaction Endonucleolytic cleavage of RNA, removing 5'-extranucleotides from tRNA precursor.. Its function is as follows. RNaseP catalyzes the removal of the 5'-leader sequence from pre-tRNA to produce the mature 5'-terminus. It can also cleave other RNA substrates such as 4.5S RNA. The protein component plays an auxiliary but essential role in vivo by binding to the 5'-leader sequence and broadening the substrate specificity of the ribozyme. This Paramagnetospirillum magneticum (strain ATCC 700264 / AMB-1) (Magnetospirillum magneticum) protein is Ribonuclease P protein component.